The primary structure comprises 716 residues: Exocyst complex component 8 (716 aa).

Ser-15 carries the post-translational modification Phosphoserine. The span at 110–119 (STGEDTAGAG) shows a compositional bias: low complexity. The disordered stretch occupies residues 110–149 (STGEDTAGAGPRERGAAQAGFLPGPAGVPREGPGTGEEGK). The PH domain maps to 173–273 (YLVYNGDLVE…WLEVLEETKR (101 aa)). A compositionally biased stretch (basic and acidic residues) spans 275–284 (LSDKRRREQE). The tract at residues 275 to 319 (LSDKRRREQEEAAALRAPPPVTSKGSNPFEDEAEEELATPEAEEE) is disordered. Acidic residues predominate over residues 303 to 319 (FEDEAEEELATPEAEEE). Residue Thr-313 is modified to Phosphothreonine.

It belongs to the EXO84 family. In terms of assembly, the exocyst complex is composed of EXOC1, EXOC2, EXOC3, EXOC4, EXOC5, EXOC6, EXOC7 and EXOC8. Interacts (via PH domain) with GTP-bound RALA and RALB. Interacts with SH3BP1; required for the localization of both SH3BP1 and the exocyst to the leading edge of migrating cells.

The protein resides in the cytoplasm. It is found in the perinuclear region. The protein localises to the cell projection. It localises to the growth cone. Its function is as follows. Component of the exocyst complex involved in the docking of exocytic vesicles with fusion sites on the plasma membrane. The protein is Exocyst complex component 8 (Exoc8) of Rattus norvegicus (Rat).